Here is a 165-residue protein sequence, read N- to C-terminus: Protein phosphatase 1 regulatory subunit 14C (165 aa).

Residues 1–12 (MSVATGSSETAG) show a composition bias toward low complexity. A disordered region spans residues 1–73 (MSVATGSSET…QRRHQQGKVT (73 aa)). N-acetylserine is present on Ser-2. At Ser-25 the chain carries Phosphoserine. Arg-27 is subject to Omega-N-methylarginine. Phosphoserine is present on Ser-33. A compositionally biased stretch (low complexity) spans 35–63 (GSSSGSGSSREDSAPVATAAAAGQVQQQQ). The residue at position 73 (Thr-73) is a Phosphothreonine; by ILK1.

The protein belongs to the PP1 inhibitor family. Has over 600-fold higher inhibitory activity when phosphorylated, creating a molecular switch for regulating the phosphorylation status of PPP1CA substrates and smooth muscle contraction. The main inhibitory site appears to be Thr-73. In terms of tissue distribution, detected in breast cancer.

The protein resides in the cytoplasm. Its subcellular location is the membrane. Functionally, inhibitor of the PP1 regulatory subunit PPP1CA. The polypeptide is Protein phosphatase 1 regulatory subunit 14C (PPP1R14C) (Homo sapiens (Human)).